A 167-amino-acid chain; its full sequence is Putative pre-16S rRNA nuclease (167 aa).

This sequence belongs to the YqgF nuclease family.

Its subcellular location is the cytoplasm. Functionally, could be a nuclease involved in processing of the 5'-end of pre-16S rRNA. In Streptomyces coelicolor (strain ATCC BAA-471 / A3(2) / M145), this protein is Putative pre-16S rRNA nuclease.